The primary structure comprises 661 residues: WD repeat-containing protein 26 (661 aa).

Residues 1 to 27 (MQANGAGGGGGGGGGGGGGGGGGGGQG) show a composition bias toward gly residues. 2 disordered regions span residues 1–70 (MQAN…ASNN) and 99–118 (TAASSSLATPELGSSLKKKK). Low complexity-rich tracts occupy residues 56 to 70 (ANGLLPSAPSAASNN) and 99 to 113 (TAASSSLATPELGSS). Residues serine 121 and serine 123 each carry the phosphoserine modification. The LisH domain maps to 123-155 (SDEDVIRLIGQHLNGLGLNQTVDLLMQESGCRL). One can recognise a CTLH domain in the interval 156–231 (EHPSATKFRN…EYLEDGKVLE (76 aa)). WD repeat units lie at residues 353–392 (EHCNEVWFCKFSNDGTKLATGSKDTTVIIWQVDPDTHLLK), 399–438 (GHAYGVSYIAWSPDDNYLVACGPDDCSELWLWNVQTGELR), 444–484 (SHED…DSWE), 524–563 (QEDHPIMSFTISKNGRLALLNVATQGVHLWDLQDRVLVRK), 566–608 (GVTQ…PIAE), and 611–651 (GHTR…DHQN).

In terms of assembly, forms homooligomers. Identified in the CTLH complex that contains GID4, RANBP9 and/or RANBP10, MKLN1, MAEA, RMND5A (or alternatively its paralog RMND5B), GID8, ARMC8, WDR26 and YPEL5. Within this complex, MAEA, RMND5A (or alternatively its paralog RMND5B), GID8, WDR26, and RANBP9 and/or RANBP10 form the catalytic core, while GID4, MKLN1, ARMC8 and YPEL5 have ancillary roles. Interacts with DDB1-CUL4A/B E3 ligase complexes. Forms a complex composed of at least WDR26, a G-beta:gamma unit, and PLCB2. Interacts with AXIN1. As to expression, broadly expressed, with highest levels in heart and skeletal muscle.

It localises to the cytoplasm. Its subcellular location is the nucleus. The protein resides in the mitochondrion. Functionally, G-beta-like protein involved in cell signal transduction. Acts as a negative regulator in MAPK signaling pathway. Functions as a scaffolding protein to promote G beta:gamma-mediated PLCB2 plasma membrane translocation and subsequent activation in leukocytes. Core component of the CTLH E3 ubiquitin-protein ligase complex that selectively accepts ubiquitin from UBE2H and mediates ubiquitination and subsequent proteasomal degradation of the transcription factor HBP1. Acts as a negative regulator of the canonical Wnt signaling pathway through preventing ubiquitination of beta-catenin CTNNB1 by the beta-catenin destruction complex, thus negatively regulating CTNNB1 degradation. Serves as a scaffold to coordinate PI3K/AKT pathway-driven cell growth and migration. Protects cells from oxidative stress-induced apoptosis via the down-regulation of AP-1 transcriptional activity as well as by inhibiting cytochrome c release from mitochondria. Also protects cells by promoting hypoxia-mediated autophagy and mitophagy. This chain is WD repeat-containing protein 26 (WDR26), found in Homo sapiens (Human).